The chain runs to 119 residues: Large ribosomal subunit protein bL20 (119 aa).

This sequence belongs to the bacterial ribosomal protein bL20 family.

Binds directly to 23S ribosomal RNA and is necessary for the in vitro assembly process of the 50S ribosomal subunit. It is not involved in the protein synthesizing functions of that subunit. The polypeptide is Large ribosomal subunit protein bL20 (Chloroflexus aurantiacus (strain ATCC 29366 / DSM 635 / J-10-fl)).